The sequence spans 194 residues: tRNA (pseudouridine(54)-N(1))-methyltransferase (194 aa).

Leu-125 lines the S-adenosyl-L-methionine pocket.

Belongs to the methyltransferase superfamily. TrmY family. In terms of assembly, homodimer.

The protein resides in the cytoplasm. It catalyses the reaction pseudouridine(54) in tRNA + S-adenosyl-L-methionine = N(1)-methylpseudouridine(54) in tRNA + S-adenosyl-L-homocysteine + H(+). In terms of biological role, specifically catalyzes the N1-methylation of pseudouridine at position 54 (Psi54) in tRNAs. This chain is tRNA (pseudouridine(54)-N(1))-methyltransferase, found in Methanospirillum hungatei JF-1 (strain ATCC 27890 / DSM 864 / NBRC 100397 / JF-1).